The primary structure comprises 102 residues: Small ribosomal subunit protein uS10 (102 aa).

Belongs to the universal ribosomal protein uS10 family. In terms of assembly, part of the 30S ribosomal subunit.

Involved in the binding of tRNA to the ribosomes. This is Small ribosomal subunit protein uS10 from Syntrophus aciditrophicus (strain SB).